A 997-amino-acid polypeptide reads, in one-letter code: MKAQTVSPTQGTISESSYVHSNLWSSRKLMIVGVLVGWLLVIHLLVNMWLLILLCASLVALGGWLGSTAILGASGQLHLERFITITTCPPCPEAERQLEQEINRTIQMIIRDFVLSWYRSVSHEPAFEAEMEAAMKGLVQELRRRMSIVDSHALTQRVLTLCGCHLQSYIQAKEATAKEQSCPVQPSQLWDAYCQVTAPHPAMSCPTTEVTYARGIVNLILKELVPKPHLETRTGRHVVVEVITCNVILPLISKLSDPDWIHLILVSIFSKYRHDAAQGTKPPCSSSVLEQPSVPTSLPLIVEVESLPVGKASSPATAPVHLTSSEPAPSPEIEEGHEAVEGDLPGMLEEKKVGNSSSHFLQPDIRGPLFLCEDSELESPLSELSKETILLMTPGNFLSDRIQDALCALDDSGALEPKDGEGSECMEGAEAEEAPGTDTETGMLVSVLNCPEIQIDTADKEVEQGDDTSLTALLEEPEKPCPLRPSCLDKDLASGVCSLEPAMPPVPLSSSPPGPLSSATFSFESLSSPDGPVVIQNLRITGTITAREHSGTGFHPYTLYTVKYETVLNGENSSGLQQLAYHTVNRRYREFLNLQTRLEEKPDLRKFIKNVKGPKKLFPDLPFGNMDSDRVEARKSLLESFLKQLCAIPEIGNSEEVQEFLALNTDARIAFVKKPFMVSRIDKMVVSAIVDTLKTAFPRSEPQSPTEELSEAENESKPQTEGKKASKSRLRFSSSKIAPALSIAEAQDKILYCLQEGNSESEVLSMSGMESFIEKQTKLLRIQPAEVPDKDPQQVPKEYVDSGLLDKAVVAQELNKSGPGTETELADTAFDLILLLLMEQWKWLCTESMQKFLHIIFGTLVQRWLEVQVANLTCPQRWAQYLHLLRESIWPGGVLPKFPRPGRTQAQKAATEKQALQSLMDLLPDFLVEILGVNKCRLSWSLVLESFQQPLINRHLIYCLGDIILELLDLSASVEECAPATSASDSPGSLKKMAVST.

The region spanning 95-273 (ERQLEQEINR…ILVSIFSKYR (179 aa)) is the PXA domain. Disordered regions lie at residues 313 to 333 (SSPA…SPEI) and 413 to 437 (GALE…APGT). Residues 422–435 (GSECMEGAEAEEAP) are compositionally biased toward acidic residues. Residues 538-668 (LRITGTITAR…EFLALNTDAR (131 aa)) enclose the PX domain. Residues R587 and R634 each contribute to the a 1,2-diacyl-sn-glycero-3-phospho-(1D-myo-inositol-3-phosphate) site. Residues 697–728 (FPRSEPQSPTEELSEAENESKPQTEGKKASKS) form a disordered region. Residues 714–724 (NESKPQTEGKK) show a composition bias toward basic and acidic residues.

The protein belongs to the sorting nexin family. As to quaternary structure, interacts with PTPRN.

The protein localises to the early endosome membrane. Its subcellular location is the cytoplasmic vesicle membrane. Functionally, plays a role in intracellular vesicle trafficking and exocytosis. May play a role in maintaining insulin-containing dense core vesicles in pancreatic beta-cells and in preventing their degradation. May play a role in insulin secretion. Interacts with membranes containing phosphatidylinositol 3-phosphate (PtdIns(3P)). The sequence is that of Sorting nexin-19 from Mus musculus (Mouse).